A 159-amino-acid polypeptide reads, in one-letter code: Protein SPA, chloroplastic (159 aa).

A chloroplast-targeting transit peptide spans 1 to 47 (MLTAPSLSRFKSPFISSPLKLPTLSSSFFTQKFHQTCRRRNSYPCIK). Residues 56–76 (VIAITVGVLSVAIGVGIPVFY) form a helical membrane-spanning segment. The interval 85 to 145 (KRENTQPCFP…TCTTCQGSGI (61 aa)) is CR-type-like. 4 CXXCXGXG motif repeats span residues 92–99 (CFPCTGTG), 103–110 (CRFCMGTG), 126–133 (CINCDGAG), and 137–144 (CTTCQGSG).

As to expression, expressed in source leaves. Lower levels of expression in fruits and stems.

The protein localises to the plastid. It localises to the chloroplast thylakoid membrane. In terms of biological role, participates in determining harvest index (HI) by affecting source-sink carbon distribution. Up-regulates the conversion of fixed carbon to exportable sugars. This Solanum lycopersicum (Tomato) protein is Protein SPA, chloroplastic.